The sequence spans 155 residues: uncharacterized protein (155 aa).

A signal peptide spans 1–19; sequence MPLSKTLVQKLQQAGMAIA.

This is an uncharacterized protein from Haemophilus influenzae (strain ATCC 51907 / DSM 11121 / KW20 / Rd).